The sequence spans 351 residues: MSVTMTLGQLAEVLGATLKGPEALQITGLATLQEAGPTQLSFLANPQYRKYLDNSQAGAVLLKAADAESFAGNTLVVADPYLAYARISHLFDPKPKAEAGIHPSAVVAEDAQVDASASIGPFAVIESGARIGANVSIGAHCFIGARCVVGEGGWLAPRVTLYHDVTIGKRVVIQSGAVIGGEGFGFANEKGIWRKIAQIGGVTIGDDVEIGVNTAVDRGALSDTRIGDGVKLDNQIQIAHNVQIGDHTAMAACVGISGSTRIGKHCMLAGGVGLVGHIDICDNVFVSGMTMVTRSITEPGSYSSGTAMQPLADWRKSAARIRHLDDMAKRLQQLEKRVDTVTSGGLPTSEG.

The Proton acceptor role is filled by H240.

Belongs to the transferase hexapeptide repeat family. LpxD subfamily. In terms of assembly, homotrimer.

It carries out the reaction a UDP-3-O-[(3R)-3-hydroxyacyl]-alpha-D-glucosamine + a (3R)-hydroxyacyl-[ACP] = a UDP-2-N,3-O-bis[(3R)-3-hydroxyacyl]-alpha-D-glucosamine + holo-[ACP] + H(+). It participates in bacterial outer membrane biogenesis; LPS lipid A biosynthesis. Its function is as follows. Catalyzes the N-acylation of UDP-3-O-acylglucosamine using 3-hydroxyacyl-ACP as the acyl donor. Is involved in the biosynthesis of lipid A, a phosphorylated glycolipid that anchors the lipopolysaccharide to the outer membrane of the cell. The chain is UDP-3-O-acylglucosamine N-acyltransferase from Pseudomonas putida (strain ATCC 47054 / DSM 6125 / CFBP 8728 / NCIMB 11950 / KT2440).